A 101-amino-acid chain; its full sequence is NADH-quinone oxidoreductase subunit K (101 aa).

Helical transmembrane passes span 4–24 (LSHYLVLGAVLFAIGVVGIFL), 30–50 (IILLMSIELMLLAVNINFVAF), and 61–81 (IFVFFILTVAAAEAAIGLAIL).

This sequence belongs to the complex I subunit 4L family. As to quaternary structure, NDH-1 is composed of 14 different subunits. Subunits NuoA, H, J, K, L, M, N constitute the membrane sector of the complex.

It is found in the cell inner membrane. The catalysed reaction is a quinone + NADH + 5 H(+)(in) = a quinol + NAD(+) + 4 H(+)(out). In terms of biological role, NDH-1 shuttles electrons from NADH, via FMN and iron-sulfur (Fe-S) centers, to quinones in the respiratory chain. The immediate electron acceptor for the enzyme in this species is believed to be ubiquinone. Couples the redox reaction to proton translocation (for every two electrons transferred, four hydrogen ions are translocated across the cytoplasmic membrane), and thus conserves the redox energy in a proton gradient. The polypeptide is NADH-quinone oxidoreductase subunit K (Nitrosomonas eutropha (strain DSM 101675 / C91 / Nm57)).